A 1040-amino-acid polypeptide reads, in one-letter code: Eukaryotic translation initiation factor 3 subunit A (1040 aa).

Residues 92–121 (LKKFIELAEKKVTEAQTKADEIQSSLESAA) are a coiled coil. In terms of domain architecture, PCI spans 339–523 (MTKAASFVLL…GVLTFDSDVF (185 aa)). Residues 608 to 906 (RVIIEKKKEA…AEARRAARKA (299 aa)) adopt a coiled-coil conformation. Composition is skewed to basic and acidic residues over residues 617–632 (AATD…EETR) and 795–901 (EVSE…EARR). 2 disordered regions span residues 617 to 641 (AATD…QQLQ) and 795 to 1040 (EVSE…QQNQ). Low complexity-rich tracts occupy residues 908–917 (LEPAAPAARP), 945–955 (KEAAGGAAPEA), 978–993 (SGSS…NGAP), and 1004–1018 (SSSS…TPGS).

This sequence belongs to the eIF-3 subunit A family. In terms of assembly, component of the eukaryotic translation initiation factor 3 (eIF-3) complex.

The protein resides in the cytoplasm. RNA-binding component of the eukaryotic translation initiation factor 3 (eIF-3) complex, which is involved in protein synthesis of a specialized repertoire of mRNAs and, together with other initiation factors, stimulates binding of mRNA and methionyl-tRNAi to the 40S ribosome. The eIF-3 complex specifically targets and initiates translation of a subset of mRNAs involved in cell proliferation. The sequence is that of Eukaryotic translation initiation factor 3 subunit A (tif32) from Aspergillus terreus (strain NIH 2624 / FGSC A1156).